Here is a 69-residue protein sequence, read N- to C-terminus: Putative membrane protein insertion efficiency factor (69 aa).

It belongs to the UPF0161 family.

Its subcellular location is the cell inner membrane. Could be involved in insertion of integral membrane proteins into the membrane. The polypeptide is Putative membrane protein insertion efficiency factor (Laribacter hongkongensis (strain HLHK9)).